The chain runs to 279 residues: Large ribosomal subunit protein uL2 (279 aa).

The tract at residues 223–279 (TVRGSAMNPNDHPHGGGEGRSPVGMDAPRTPWGKRHMGVKTRNNKKSSTSMIVRRRK) is disordered. Over residues 254-267 (WGKRHMGVKTRNNK) the composition is skewed to basic residues.

This sequence belongs to the universal ribosomal protein uL2 family. Part of the 50S ribosomal subunit. Forms a bridge to the 30S subunit in the 70S ribosome.

One of the primary rRNA binding proteins. Required for association of the 30S and 50S subunits to form the 70S ribosome, for tRNA binding and peptide bond formation. It has been suggested to have peptidyltransferase activity; this is somewhat controversial. Makes several contacts with the 16S rRNA in the 70S ribosome. This Ureaplasma urealyticum serovar 10 (strain ATCC 33699 / Western) protein is Large ribosomal subunit protein uL2.